The primary structure comprises 205 residues: Large ribosomal subunit protein uL3 (205 aa).

The protein belongs to the universal ribosomal protein uL3 family. In terms of assembly, part of the 50S ribosomal subunit. Forms a cluster with proteins L14 and L19.

One of the primary rRNA binding proteins, it binds directly near the 3'-end of the 23S rRNA, where it nucleates assembly of the 50S subunit. In Thermosipho africanus (strain TCF52B), this protein is Large ribosomal subunit protein uL3.